Here is a 502-residue protein sequence, read N- to C-terminus: tRNA-2-methylthio-N(6)-dimethylallyladenosine synthase (502 aa).

The MTTase N-terminal domain maps to 12–129 (RTYQVRTYGC…LPVLLERARH (118 aa)). Residues Cys21, Cys58, Cys92, Cys166, Cys170, and Cys173 each contribute to the [4Fe-4S] cluster site. A Radical SAM core domain is found at 152 to 383 (RESTYAGWVS…ACVEEITWAE (232 aa)). The region spanning 385 to 455 (RRLVGETVEV…PHHLNADGEP (71 aa)) is the TRAM domain. Residues 451–502 (ADGEPLAHRRTPAGDAAEAGRRPRTAGVSLGLPTVGAPPSPVPPAASSACAC) are disordered.

The protein belongs to the methylthiotransferase family. MiaB subfamily. Monomer. [4Fe-4S] cluster is required as a cofactor.

Its subcellular location is the cytoplasm. The catalysed reaction is N(6)-dimethylallyladenosine(37) in tRNA + (sulfur carrier)-SH + AH2 + 2 S-adenosyl-L-methionine = 2-methylsulfanyl-N(6)-dimethylallyladenosine(37) in tRNA + (sulfur carrier)-H + 5'-deoxyadenosine + L-methionine + A + S-adenosyl-L-homocysteine + 2 H(+). In terms of biological role, catalyzes the methylthiolation of N6-(dimethylallyl)adenosine (i(6)A), leading to the formation of 2-methylthio-N6-(dimethylallyl)adenosine (ms(2)i(6)A) at position 37 in tRNAs that read codons beginning with uridine. This Salinispora arenicola (strain CNS-205) protein is tRNA-2-methylthio-N(6)-dimethylallyladenosine synthase.